The primary structure comprises 37 residues: Mau operon transcriptional activator (37 aa).

This sequence belongs to the LysR transcriptional regulatory family.

In terms of biological role, transcriptional activator of the mau genes involved in methylamine metabolism. The sequence is that of Mau operon transcriptional activator (mauR) from Paracoccus versutus (Thiobacillus versutus).